We begin with the raw amino-acid sequence, 133 residues long: Large ribosomal subunit protein uL15 (133 aa).

The segment at 1–64 (MGLENLKPAK…QPLQRRLPKI (64 aa)) is disordered.

It belongs to the universal ribosomal protein uL15 family. Part of the 50S ribosomal subunit.

Functionally, binds to the 23S rRNA. The polypeptide is Large ribosomal subunit protein uL15 (Helicobacter pylori (strain Shi470)).